A 248-amino-acid chain; its full sequence is Leucyl/phenylalanyl-tRNA--protein transferase (248 aa).

Belongs to the L/F-transferase family.

Its subcellular location is the cytoplasm. It carries out the reaction N-terminal L-lysyl-[protein] + L-leucyl-tRNA(Leu) = N-terminal L-leucyl-L-lysyl-[protein] + tRNA(Leu) + H(+). It catalyses the reaction N-terminal L-arginyl-[protein] + L-leucyl-tRNA(Leu) = N-terminal L-leucyl-L-arginyl-[protein] + tRNA(Leu) + H(+). The enzyme catalyses L-phenylalanyl-tRNA(Phe) + an N-terminal L-alpha-aminoacyl-[protein] = an N-terminal L-phenylalanyl-L-alpha-aminoacyl-[protein] + tRNA(Phe). Its function is as follows. Functions in the N-end rule pathway of protein degradation where it conjugates Leu, Phe and, less efficiently, Met from aminoacyl-tRNAs to the N-termini of proteins containing an N-terminal arginine or lysine. This Rhizorhabdus wittichii (strain DSM 6014 / CCUG 31198 / JCM 15750 / NBRC 105917 / EY 4224 / RW1) (Sphingomonas wittichii) protein is Leucyl/phenylalanyl-tRNA--protein transferase.